The chain runs to 1770 residues: Transposon Ty2-DR3 Gag-Pol polyprotein (1770 aa).

Composition is skewed to polar residues over residues 1 to 11 (MESQQLHQNPH), 19 to 39 (ASVT…SASN), 49 to 60 (KVNSQQETTPGT), 366 to 390 (VSRT…NSSK), 399 to 408 (IATSSKFSRV), and 415 to 435 (ESTV…GQQQ). Disordered stretches follow at residues 1-89 (MESQ…QQHG) and 355-449 (SQYK…SNDE). The segment at 295 to 397 (ENNINVSDRL…SSKPRAAKAH (103 aa)) is RNA-binding. Asp-457 (for protease activity; shared with dimeric partner) is an active-site residue. Positions 579–636 (NVNKSKSVNKYPYPLIHRMLGHANFRSIQKSLKKNAVTYLKESDIEWSNASTYQCPDC) are integrase-type zinc finger-like. An Integrase catalytic domain is found at 656–831 (ESYEPFQYLH…AGLDITTILP (176 aa)). 2 residues coordinate Mg(2+): Asp-667 and Asp-732. Disordered regions lie at residues 1005 to 1038 (GGTI…MIDL) and 1057 to 1205 (GGTE…TEIE). Composition is skewed to polar residues over residues 1009-1024 (ESDT…FTAR) and 1065-1082 (QRNS…STPS). A Bipartite nuclear localization signal motif is present at residues 1193 to 1227 (KKRSLEDNETEIEVSRDTWNNKNMRSLEPPRSKKR). In terms of domain architecture, Reverse transcriptase Ty1/copia-type spans 1353 to 1491 (NDYYITQLDI…DILGLEIKYQ (139 aa)). Mg(2+) contacts are provided by Asp-1361, Asp-1442, Asp-1443, Asp-1625, Glu-1667, and Asp-1700. One can recognise an RNase H Ty1/copia-type domain in the interval 1625 to 1767 (DASYGNQPYY…IKTFKLLTNK (143 aa)).

In terms of assembly, the capsid protein forms a homotrimer, from which the VLPs are assembled. The protease is a homodimer, whose active site consists of two apposed aspartic acid residues. In terms of processing, initially, virus-like particles (VLPs) are composed of the structural unprocessed proteins Gag and Gag-Pol, and also contain the host initiator methionine tRNA (tRNA(i)-Met) which serves as a primer for minus-strand DNA synthesis, and a dimer of genomic Ty RNA. Processing of the polyproteins occurs within the particle and proceeds by an ordered pathway, called maturation. First, the protease (PR) is released by autocatalytic cleavage of the Gag-Pol polyprotein, and this cleavage is a prerequisite for subsequent processing at the remaining sites to release the mature structural and catalytic proteins. Maturation takes place prior to the RT reaction and is required to produce transposition-competent VLPs.

The protein localises to the cytoplasm. It localises to the nucleus. The enzyme catalyses DNA(n) + a 2'-deoxyribonucleoside 5'-triphosphate = DNA(n+1) + diphosphate. It carries out the reaction Endonucleolytic cleavage to 5'-phosphomonoester.. Its function is as follows. Capsid protein (CA) is the structural component of the virus-like particle (VLP), forming the shell that encapsulates the retrotransposons dimeric RNA genome. The particles are assembled from trimer-clustered units and there are holes in the capsid shells that allow for the diffusion of macromolecules. CA also has nucleocapsid-like chaperone activity, promoting primer tRNA(i)-Met annealing to the multipartite primer-binding site (PBS), dimerization of Ty2 RNA and initiation of reverse transcription. The aspartyl protease (PR) mediates the proteolytic cleavages of the Gag and Gag-Pol polyproteins after assembly of the VLP. In terms of biological role, reverse transcriptase/ribonuclease H (RT) is a multifunctional enzyme that catalyzes the conversion of the retro-elements RNA genome into dsDNA within the VLP. The enzyme displays a DNA polymerase activity that can copy either DNA or RNA templates, and a ribonuclease H (RNase H) activity that cleaves the RNA strand of RNA-DNA heteroduplexes during plus-strand synthesis and hydrolyzes RNA primers. The conversion leads to a linear dsDNA copy of the retrotransposon that includes long terminal repeats (LTRs) at both ends. Functionally, integrase (IN) targets the VLP to the nucleus, where a subparticle preintegration complex (PIC) containing at least integrase and the newly synthesized dsDNA copy of the retrotransposon must transit the nuclear membrane. Once in the nucleus, integrase performs the integration of the dsDNA into the host genome. This chain is Transposon Ty2-DR3 Gag-Pol polyprotein (TY2B-DR3), found in Saccharomyces cerevisiae (strain ATCC 204508 / S288c) (Baker's yeast).